Here is a 215-residue protein sequence, read N- to C-terminus: Putative zinc finger protein ORF121 (215 aa).

The segment at 53–105 (CVICMEPTYTKKTLAECDIEGGALRVTTMPCPTHYICDNCIRQEMEDKCPICR) adopts an RING-type; degenerate zinc-finger fold.

In Magallana gigas (Pacific oyster), this protein is Putative zinc finger protein ORF121.